A 392-amino-acid polypeptide reads, in one-letter code: N-acetylneuraminate epimerase (392 aa).

An N-terminal signal peptide occupies residues Met1–Ala35. Kelch repeat units follow at residues Ser56–Ala100, Lys102–Asp155, Ser157–Asn192, Ala193–Asp238, Leu241–Ala290, Lys312–Asp361, and Val363–Glu392. Glu247 serves as the catalytic Proton acceptor.

The protein belongs to the NanM family. In terms of assembly, homodimer.

Its subcellular location is the periplasm. It catalyses the reaction N-acetyl-alpha-neuraminate = N-acetyl-beta-neuraminate. Its function is as follows. Converts alpha-N-acetylneuranimic acid (Neu5Ac) to the beta-anomer, accelerating the equilibrium between the alpha- and beta-anomers. Probably facilitates sialidase-negative bacteria to compete successfully for limited amounts of extracellular Neu5Ac, which is likely taken up in the beta-anomer. In addition, the rapid removal of sialic acid from solution might be advantageous to the bacterium to damp down host responses. This Yersinia pseudotuberculosis serotype O:1b (strain IP 31758) protein is N-acetylneuraminate epimerase.